Reading from the N-terminus, the 187-residue chain is Protein canopy-1 (187 aa).

A signal peptide spans 1 to 24 (MSPWIKHICLVLVAAFMLVKTTES). Residues 28–181 (EALYCSACMA…EVSDHCKSSV (154 aa)) enclose the Saposin B-type domain. Intrachain disulfides connect Cys32/Cys177, Cys35/Cys170, and Cys90/Cys143. The Prevents secretion from ER motif lies at 184 to 187 (HSEL).

The protein belongs to the canopy family. In terms of assembly, homodimer. Interacts with fgfr1.

It is found in the endoplasmic reticulum. Involved in the maintenance of the midbrain-hindbrain boundary (MHB) organizer. Contributes to a positive-feedback loop of FGF signaling in the MHB, enabling the MHB to exert its role as an organizer for the tectal and cerebellar development. The chain is Protein canopy-1 (cnpy1) from Danio rerio (Zebrafish).